Reading from the N-terminus, the 352-residue chain is Anthranilate phosphoribosyltransferase (352 aa).

Residues Gly82, 85–86, Ser90, 92–95, 110–118, and Gly122 each bind 5-phospho-alpha-D-ribose 1-diphosphate; these read GD, NIST, and KHGNRAVTG. Gly82 provides a ligand contact to anthranilate. Ser94 is a Mg(2+) binding site. Residue Asn113 participates in anthranilate binding. An anthranilate-binding site is contributed by Arg168. Residues Asp232 and Glu233 each contribute to the Mg(2+) site.

It belongs to the anthranilate phosphoribosyltransferase family. Homodimer. Mg(2+) serves as cofactor.

The enzyme catalyses N-(5-phospho-beta-D-ribosyl)anthranilate + diphosphate = 5-phospho-alpha-D-ribose 1-diphosphate + anthranilate. It participates in amino-acid biosynthesis; L-tryptophan biosynthesis; L-tryptophan from chorismate: step 2/5. Catalyzes the transfer of the phosphoribosyl group of 5-phosphorylribose-1-pyrophosphate (PRPP) to anthranilate to yield N-(5'-phosphoribosyl)-anthranilate (PRA). The protein is Anthranilate phosphoribosyltransferase of Methanothermobacter thermautotrophicus (strain ATCC 29096 / DSM 1053 / JCM 10044 / NBRC 100330 / Delta H) (Methanobacterium thermoautotrophicum).